The following is a 423-amino-acid chain: Innexin eat-5 (423 aa).

The next 4 helical transmembrane spans lie at 25-41 (YYYSTLIIMGMSLTITA), 102-122 (PFIMAIEAAFFYLPVIFWSML), 277-297 (IFLFLYIWFLLVFFVTLFDSI), and 341-361 (HSILLSEFCLHKFTPDIIILL).

This sequence belongs to the pannexin family. Heterooligomer of eat-5 and another innexin. Expressed in pharyngeal muscles.

The protein resides in the cell membrane. It is found in the cell junction. It localises to the gap junction. Functionally, structural component of the gap junctions. Required for synchronized pharyngeal muscle contractions. In Caenorhabditis elegans, this protein is Innexin eat-5 (eat-5).